Consider the following 145-residue polypeptide: Toxin Res (145 aa).

The protein belongs to the MbcT/ParT/Res family. In terms of assembly, homodimer. Forms a complex with cognate antitoxin Xre; the 2 toxin molecules dimerize and each contacts an Xre homodimer. Most Res-Xre contacts are between the antitoxin molecule closest to the toxin.

Functionally, toxic component of a type II toxin-antitoxin (TA) system. Expression in E.coli inhibits cell growth. In vivo it is probably neutralized by cognate antitoxin Xre; this has not been shown upon expression in E.coli. Probably depletes intracellular NAD(+). This Pseudomonas putida (strain ATCC 47054 / DSM 6125 / CFBP 8728 / NCIMB 11950 / KT2440) protein is Toxin Res.